Here is a 350-residue protein sequence, read N- to C-terminus: N(4)-bis(aminopropyl)spermidine synthase (350 aa).

This sequence belongs to the branched-chain polyamine synthase family.

The protein localises to the cytoplasm. It carries out the reaction 2 S-adenosyl 3-(methylsulfanyl)propylamine + spermidine = N(4)-bis(aminopropyl)spermidine + 2 S-methyl-5'-thioadenosine + 2 H(+). It participates in amine and polyamine biosynthesis. Its function is as follows. Involved in the biosynthesis of branched-chain polyamines, which support the growth of thermophiles under high-temperature conditions. Catalyzes the sequential condensation of spermidine with the aminopropyl groups of decarboxylated S-adenosylmethionines to produce N(4)-bis(aminopropyl)spermidine via N(4)-aminopropylspermidine. The chain is N(4)-bis(aminopropyl)spermidine synthase from Methanocaldococcus jannaschii (strain ATCC 43067 / DSM 2661 / JAL-1 / JCM 10045 / NBRC 100440) (Methanococcus jannaschii).